The primary structure comprises 550 residues: Methyl-coenzyme M reductase I subunit alpha (550 aa).

Gln-147 serves as a coordination point for coenzyme F430. Coenzyme B contacts are provided by residues Arg-225, 256 to 257 (KH), and Arg-270. His-257 carries the pros-methylhistidine modification. Arg-271 bears the 5-methylarginine mark. Tyr-333 contributes to the coenzyme M binding site. The residue at position 400 (Gln-400) is a 2-methylglutamine. Tyr-444 lines the coenzyme M pocket. Residue Gly-445 is modified to 1-thioglycine. Asp-450 bears the (Z)-2,3-didehydroaspartate mark. Cys-452 carries the post-translational modification S-methylcysteine.

This sequence belongs to the methyl-coenzyme M reductase alpha subunit family. As to quaternary structure, MCR is a hexamer of two alpha, two beta, and two gamma chains, forming a dimer of heterotrimers. Coenzyme F430 is required as a cofactor. The alpha subunit contains six modified amino acids near the active site region. Is methylated on His-257, Arg-271, Gln-400 and Cys-452, probably by the action of specific S-adenosylmethionine-dependent methyltransferases. Also contains a thioglycine at position 445, forming a thiopeptide bond. Contains a didehydroaspartate residue at position 450. The methylation on C5 of Arg-271 is a post-translational methylation not essential in vivo, but which plays a role for the stability and structural integrity of MCR.

It localises to the cytoplasm. It catalyses the reaction coenzyme B + methyl-coenzyme M = methane + coenzyme M-coenzyme B heterodisulfide. The protein operates within one-carbon metabolism; methyl-coenzyme M reduction; methane from methyl-coenzyme M: step 1/1. Methyl-coenzyme M reductase activity is inhibited by 3-nitrooxypropanol (3-NOP) in vitro and in vivo, by oxidation of its active site Ni(I), which stops both growth and methanogenesis. Is also inhibited by the reaction product CoM-S-S-CoB. Functionally, component of the methyl-coenzyme M reductase (MCR) I that catalyzes the reductive cleavage of methyl-coenzyme M (CoM-S-CH3 or 2-(methylthio)ethanesulfonate) using coenzyme B (CoB or 7-mercaptoheptanoylthreonine phosphate) as reductant which results in the production of methane and the mixed heterodisulfide of CoB and CoM (CoM-S-S-CoB). This is the final step in methanogenesis. Neither N-6-mercaptohexanoylthreonine phosphate (H-S-HxoTP) nor N-8-mercaptooctanoylthreonine phosphate (H-SOcoTP) nor any other thiol compound such as CoA or CoM can substitute for CoB as the electron donor. This is Methyl-coenzyme M reductase I subunit alpha (mcrA) from Methanothermobacter marburgensis (strain ATCC BAA-927 / DSM 2133 / JCM 14651 / NBRC 100331 / OCM 82 / Marburg) (Methanobacterium thermoautotrophicum).